The chain runs to 200 residues: Pyridoxine/pyridoxamine 5'-phosphate oxidase (200 aa).

FMN is bound by residues 49–54 (RMLLLK), 64–65 (YT), R70, K71, and Q93. Substrate is bound at residue K54. Positions 111, 115, and 119 each coordinate substrate. Residues 128 to 129 (QS) and W173 each bind FMN. 179–181 (RLH) contacts substrate. R183 is an FMN binding site.

The protein belongs to the pyridoxamine 5'-phosphate oxidase family. Homodimer. The cofactor is FMN.

It catalyses the reaction pyridoxamine 5'-phosphate + O2 + H2O = pyridoxal 5'-phosphate + H2O2 + NH4(+). It carries out the reaction pyridoxine 5'-phosphate + O2 = pyridoxal 5'-phosphate + H2O2. It participates in cofactor metabolism; pyridoxal 5'-phosphate salvage; pyridoxal 5'-phosphate from pyridoxamine 5'-phosphate: step 1/1. Its pathway is cofactor metabolism; pyridoxal 5'-phosphate salvage; pyridoxal 5'-phosphate from pyridoxine 5'-phosphate: step 1/1. In terms of biological role, catalyzes the oxidation of either pyridoxine 5'-phosphate (PNP) or pyridoxamine 5'-phosphate (PMP) into pyridoxal 5'-phosphate (PLP). This chain is Pyridoxine/pyridoxamine 5'-phosphate oxidase, found in Gluconobacter oxydans (strain 621H) (Gluconobacter suboxydans).